A 394-amino-acid chain; its full sequence is Putative pectate lyase 17 (394 aa).

An N-terminal signal peptide occupies residues 1-22 (MTHFTVSCLLVALFLCQSLVHA). Ca(2+)-binding residues include Asp192, Asp216, and Asp220. Arg272 is an active-site residue.

This sequence belongs to the polysaccharide lyase 1 family. Requires Ca(2+) as cofactor.

The enzyme catalyses Eliminative cleavage of (1-&gt;4)-alpha-D-galacturonan to give oligosaccharides with 4-deoxy-alpha-D-galact-4-enuronosyl groups at their non-reducing ends.. Its pathway is glycan metabolism; pectin degradation; 2-dehydro-3-deoxy-D-gluconate from pectin: step 2/5. This chain is Putative pectate lyase 17, found in Arabidopsis thaliana (Mouse-ear cress).